The primary structure comprises 402 residues: Type II NADH:quinone oxidoreductase (402 aa).

FAD is bound by residues 12–16 (GAGYA), 39–40 (NK), and V83. E172 is a catalytic residue. FAD is bound by residues D302, 319 to 320 (AQ), and K379.

It belongs to the NADH dehydrogenase family. Requires FAD as cofactor.

It localises to the cell membrane. The enzyme catalyses a quinone + NADH + H(+) = a quinol + NAD(+). Its function is as follows. Alternative, nonproton pumping NADH:quinone oxidoreductase that delivers electrons to the respiratory chain by oxidation of NADH and reduction of quinones, and contributes to the regeneration of NAD(+). The chain is Type II NADH:quinone oxidoreductase from Staphylococcus saprophyticus subsp. saprophyticus (strain ATCC 15305 / DSM 20229 / NCIMB 8711 / NCTC 7292 / S-41).